Consider the following 67-residue polypeptide: Bowman-Birk type proteinase inhibitor A4 (67 aa).

Intrachain disulfides connect Cys-10–Cys-29, Cys-16–Cys-27, Cys-36–Cys-43, and Cys-40–Cys-57.

It belongs to the Bowman-Birk serine protease inhibitor family. In terms of tissue distribution, expressed in bulb (at protein level).

Functionally, serine protease inhibitor. Inhibits trypsin (Ki=12nM) and weakly inhibits chymotrypsin with (Ki=460nm). Does not inhibit bacterial subtilisin. The polypeptide is Bowman-Birk type proteinase inhibitor A4 (Hyacinthus orientalis (Common hyacinth)).